The following is a 163-amino-acid chain: NADH-quinone oxidoreductase subunit I (163 aa).

4Fe-4S ferredoxin-type domains follow at residues 54–84 (LRRYPNGEERCIACKLCEAVCPALAITIESD) and 94–123 (TRYDIDLTKCIFCGFCEEACPVDAIVETHI). Residues Cys-64, Cys-67, Cys-70, Cys-74, Cys-103, Cys-106, Cys-109, and Cys-113 each contribute to the [4Fe-4S] cluster site.

The protein belongs to the complex I 23 kDa subunit family. In terms of assembly, NDH-1 is composed of 14 different subunits. Subunits NuoA, H, J, K, L, M, N constitute the membrane sector of the complex. Requires [4Fe-4S] cluster as cofactor.

It is found in the cell inner membrane. It catalyses the reaction a quinone + NADH + 5 H(+)(in) = a quinol + NAD(+) + 4 H(+)(out). NDH-1 shuttles electrons from NADH, via FMN and iron-sulfur (Fe-S) centers, to quinones in the respiratory chain. The immediate electron acceptor for the enzyme in this species is believed to be ubiquinone. Couples the redox reaction to proton translocation (for every two electrons transferred, four hydrogen ions are translocated across the cytoplasmic membrane), and thus conserves the redox energy in a proton gradient. The sequence is that of NADH-quinone oxidoreductase subunit I from Ralstonia nicotianae (strain ATCC BAA-1114 / GMI1000) (Ralstonia solanacearum).